The following is a 557-amino-acid chain: Probable protein kinase UbiB (557 aa).

In terms of domain architecture, Protein kinase spans 121 to 509; sequence SFDTVPLASA…RKLQTRVVTA (389 aa). Residues 127 to 135 and Lys154 each bind ATP; that span reads LASASIAQV. The Proton acceptor role is filled by Asp289. The next 2 membrane-spanning stretches (helical) occupy residues 506–526 and 535–555; these read VVTA…YGLH and VPVW…VAWL.

The protein belongs to the ABC1 family. UbiB subfamily.

The protein localises to the cell inner membrane. It participates in cofactor biosynthesis; ubiquinone biosynthesis [regulation]. In terms of biological role, is probably a protein kinase regulator of UbiI activity which is involved in aerobic coenzyme Q (ubiquinone) biosynthesis. The protein is Probable protein kinase UbiB of Xanthomonas oryzae pv. oryzae (strain MAFF 311018).